We begin with the raw amino-acid sequence, 147 residues long: Lysozyme C-2 (147 aa).

The signal sequence occupies residues 1-18 (MKALVILGFLFLSVAVQG). One can recognise a C-type lysozyme domain in the interval 19–147 (KVFERCELAR…VSSYVEGCTL (129 aa)). 4 disulfide bridges follow: C24–C145, C48–C133, C83–C99, and C95–C113. Catalysis depends on residues E53 and D71.

This sequence belongs to the glycosyl hydrolase 22 family. In terms of assembly, monomer. Stomach-specific.

It catalyses the reaction Hydrolysis of (1-&gt;4)-beta-linkages between N-acetylmuramic acid and N-acetyl-D-glucosamine residues in a peptidoglycan and between N-acetyl-D-glucosamine residues in chitodextrins.. Lysozymes have primarily a bacteriolytic function; those in tissues and body fluids are associated with the monocyte-macrophage system and enhance the activity of immunoagents. The sequence is that of Lysozyme C-2 (LYZ2) from Bos taurus (Bovine).